We begin with the raw amino-acid sequence, 654 residues long: Acetyl-coenzyme A synthetase (654 aa).

CoA contacts are provided by residues 196–199 and Thr-316; that span reads RGGK. Residues 392–394, 416–421, Asp-507, and Arg-522 contribute to the ATP site; these read GEP and DTWWQT. Ser-530 contacts CoA. Position 533 (Arg-533) interacts with ATP. 2 residues coordinate Mg(2+): Val-544 and Val-549. Lys-619 is subject to N6-acetyllysine.

The protein belongs to the ATP-dependent AMP-binding enzyme family. Requires Mg(2+) as cofactor. In terms of processing, acetylated. Deacetylation by the SIR2-homolog deacetylase activates the enzyme.

The enzyme catalyses acetate + ATP + CoA = acetyl-CoA + AMP + diphosphate. Catalyzes the conversion of acetate into acetyl-CoA (AcCoA), an essential intermediate at the junction of anabolic and catabolic pathways. AcsA undergoes a two-step reaction. In the first half reaction, AcsA combines acetate with ATP to form acetyl-adenylate (AcAMP) intermediate. In the second half reaction, it can then transfer the acetyl group from AcAMP to the sulfhydryl group of CoA, forming the product AcCoA. In Chromobacterium violaceum (strain ATCC 12472 / DSM 30191 / JCM 1249 / CCUG 213 / NBRC 12614 / NCIMB 9131 / NCTC 9757 / MK), this protein is Acetyl-coenzyme A synthetase.